A 313-amino-acid polypeptide reads, in one-letter code: uncharacterized protein (313 aa).

Transmembrane regions (helical) follow at residues L42–T64 and V74–V96.

It localises to the cell membrane. This is an uncharacterized protein from Treponema pallidum (strain Nichols).